We begin with the raw amino-acid sequence, 393 residues long: S-adenosylmethionine synthase (393 aa).

Residue histidine 17 coordinates ATP. Residue aspartate 19 participates in Mg(2+) binding. Glutamate 45 is a binding site for K(+). Positions 58 and 106 each coordinate L-methionine. Positions 106-116 are flexible loop; it reads QSAHIAQGVDA. ATP-binding positions include 171-173, 237-238, aspartate 246, 252-253, alanine 269, and lysine 273; these read DAK, KF, and RK. Aspartate 246 contributes to the L-methionine binding site. Residue lysine 277 participates in L-methionine binding.

This sequence belongs to the AdoMet synthase family. Homotetramer; dimer of dimers. Mg(2+) serves as cofactor. K(+) is required as a cofactor.

It localises to the cytoplasm. The enzyme catalyses L-methionine + ATP + H2O = S-adenosyl-L-methionine + phosphate + diphosphate. Its pathway is amino-acid biosynthesis; S-adenosyl-L-methionine biosynthesis; S-adenosyl-L-methionine from L-methionine: step 1/1. Catalyzes the formation of S-adenosylmethionine (AdoMet) from methionine and ATP. The overall synthetic reaction is composed of two sequential steps, AdoMet formation and the subsequent tripolyphosphate hydrolysis which occurs prior to release of AdoMet from the enzyme. The chain is S-adenosylmethionine synthase from Ruegeria sp. (strain TM1040) (Silicibacter sp.).